The sequence spans 210 residues: Leucyl/phenylalanyl-tRNA--protein transferase (210 aa).

Belongs to the L/F-transferase family.

It localises to the cytoplasm. It carries out the reaction N-terminal L-lysyl-[protein] + L-leucyl-tRNA(Leu) = N-terminal L-leucyl-L-lysyl-[protein] + tRNA(Leu) + H(+). The catalysed reaction is N-terminal L-arginyl-[protein] + L-leucyl-tRNA(Leu) = N-terminal L-leucyl-L-arginyl-[protein] + tRNA(Leu) + H(+). The enzyme catalyses L-phenylalanyl-tRNA(Phe) + an N-terminal L-alpha-aminoacyl-[protein] = an N-terminal L-phenylalanyl-L-alpha-aminoacyl-[protein] + tRNA(Phe). Functionally, functions in the N-end rule pathway of protein degradation where it conjugates Leu, Phe and, less efficiently, Met from aminoacyl-tRNAs to the N-termini of proteins containing an N-terminal arginine or lysine. The chain is Leucyl/phenylalanyl-tRNA--protein transferase from Ruegeria sp. (strain TM1040) (Silicibacter sp.).